Consider the following 463-residue polypeptide: L-seryl-tRNA(Sec) selenium transferase (463 aa).

At Lys-295 the chain carries N6-(pyridoxal phosphate)lysine.

It belongs to the SelA family. Homodecamer; pentamer of dimers. Binds only one seryl-tRNA(Sec) per dimer. Pyridoxal 5'-phosphate is required as a cofactor.

It localises to the cytoplasm. It catalyses the reaction L-seryl-tRNA(Sec) + selenophosphate + H(+) = L-selenocysteinyl-tRNA(Sec) + phosphate. The protein operates within aminoacyl-tRNA biosynthesis; selenocysteinyl-tRNA(Sec) biosynthesis; selenocysteinyl-tRNA(Sec) from L-seryl-tRNA(Sec) (bacterial route): step 1/1. Converts seryl-tRNA(Sec) to selenocysteinyl-tRNA(Sec) required for selenoprotein biosynthesis. The sequence is that of L-seryl-tRNA(Sec) selenium transferase from Salmonella arizonae (strain ATCC BAA-731 / CDC346-86 / RSK2980).